A 205-amino-acid chain; its full sequence is MVNYPHKVSKKINRTSPISSQRVNFANRGMSFEAAINDSNQYYLAHDIAVIHKKPTPVQIVKVDYPKRSRAKIVEAYFRQASTTDYSGVFKRHYIDFEAKETRQKASMPMKNFHAHQIEHMKQVVKQGGICFVLLHFSTLKETYLLPATHLIEFYQVDMGSKSMPLTFIRQYGFEIQMGRFPSIPYLEIVEKNLLGGESFENYNN.

Thr-83, Asp-85, Glu-98, and Gln-117 together coordinate Mg(2+).

It belongs to the RecU family. The cofactor is Mg(2+).

It is found in the cytoplasm. It carries out the reaction Endonucleolytic cleavage at a junction such as a reciprocal single-stranded crossover between two homologous DNA duplexes (Holliday junction).. In terms of biological role, endonuclease that resolves Holliday junction intermediates in genetic recombination. Cleaves mobile four-strand junctions by introducing symmetrical nicks in paired strands. Promotes annealing of linear ssDNA with homologous dsDNA. Required for DNA repair, homologous recombination and chromosome segregation. The protein is Holliday junction resolvase RecU of Streptococcus suis (strain 98HAH33).